Reading from the N-terminus, the 702-residue chain is Vertnin (702 aa).

A disordered region spans residues 562 to 625 (VPTLGKGGQE…QGQPHSGPLL (64 aa)). Positions 570–582 (QEAEEKQEKEAGR) are enriched in basic and acidic residues.

The protein belongs to the vertnin family.

The protein localises to the nucleus. In terms of biological role, acts as a transcription factor that regulates development of thoracic vertebrae. The protein is Vertnin of Homo sapiens (Human).